Consider the following 311-residue polypeptide: 4-hydroxy-tetrahydrodipicolinate synthase (311 aa).

Position 51 (T51) interacts with pyruvate. Residue Y140 is the Proton donor/acceptor of the active site. Residue K168 is the Schiff-base intermediate with substrate of the active site. I209 contacts pyruvate.

Belongs to the DapA family. Homotetramer; dimer of dimers.

The protein localises to the cytoplasm. It carries out the reaction L-aspartate 4-semialdehyde + pyruvate = (2S,4S)-4-hydroxy-2,3,4,5-tetrahydrodipicolinate + H2O + H(+). It functions in the pathway amino-acid biosynthesis; L-lysine biosynthesis via DAP pathway; (S)-tetrahydrodipicolinate from L-aspartate: step 3/4. Functionally, catalyzes the condensation of (S)-aspartate-beta-semialdehyde [(S)-ASA] and pyruvate to 4-hydroxy-tetrahydrodipicolinate (HTPA). This chain is 4-hydroxy-tetrahydrodipicolinate synthase, found in Streptococcus pneumoniae (strain 70585).